Here is a 602-residue protein sequence, read N- to C-terminus: Rho family-interacting cell polarization regulator 2 (602 aa).

The segment at 46–73 (KKPQAKVKKMHNLGHKNSTTPKEPQPKR) is disordered. A compositionally biased stretch (basic residues) spans 48–59 (PQAKVKKMHNLG). Positions 83-112 (NGLDEYLEVHQTELDKLTAQLKDMRRNSRL) form a coiled coil. A necessary for interaction with NCAM and myoblast protrusion formation region spans residues 173 to 421 (RESLTEINRS…TTAATQHRAL (249 aa)). The interval 384 to 474 (GDLPYEDRVP…RSEVCQKPSN (91 aa)) is disordered. A compositionally biased stretch (polar residues) spans 403 to 416 (AHVSSSPDITTAAT). The segment covering 423–437 (SSESSSPDCSSSDSC) has biased composition (low complexity).

Belongs to the RIPOR family. As to quaternary structure, homooligomer; homooligomerization is regulated by RHOC and leads to the formation of concatemers through the association of N- and C-termini. Interacts with NCAM.

The protein localises to the cytoplasm. The protein resides in the cytoskeleton. It is found in the cell projection. It localises to the filopodium. Its subcellular location is the apical cell membrane. The protein localises to the stereocilium. The protein resides in the stereocilium membrane. Functionally, acts as an inhibitor of the small GTPase RHOA and plays several roles in the regulation of myoblast and hair cell differentiation, lymphocyte T proliferation and neutrophil polarization. Plays a role in fetal mononuclear myoblast differentiation by promoting filopodia and myotube formation. Maintains naive T lymphocytes in a quiescent state and prevents chemokine-induced T lymphocyte responses, such as cell adhesion, polarization and migration. Involved also in the regulation of neutrophil polarization, chemotaxis and adhesion. Required for normal development of inner and outer hair cell stereocilia within the cochlea of the inner ear. Plays a role for maintaining the structural organization of the basal domain of stereocilia. Involved in mechanosensory hair cell function. Required for normal hearing. The protein is Rho family-interacting cell polarization regulator 2 of Gallus gallus (Chicken).